We begin with the raw amino-acid sequence, 645 residues long: Chaperone protein DnaK (645 aa).

Threonine 200 carries the post-translational modification Phosphothreonine; by autocatalysis. Residues 603–645 (AYSAQKDSGTSTDSTASDTSGNPEERVVDSEYQEIKKDDEDKK) are disordered. Residues 609–623 (DSGTSTDSTASDTSG) show a composition bias toward low complexity. Residues 625 to 645 (PEERVVDSEYQEIKKDDEDKK) are compositionally biased toward basic and acidic residues.

Belongs to the heat shock protein 70 family.

Its function is as follows. Acts as a chaperone. This chain is Chaperone protein DnaK, found in Anaplasma marginale (strain St. Maries).